Here is a 270-residue protein sequence, read N- to C-terminus: MPSSFDLLGEMIGLLQTEQLTSSLACPLPNALTKRQDLWRALINQRPALPLSKDYLNLEDAYLDDWRASFVPVSVKDCQKTNYTSLFLYHGDIRYLAVDAIVNAANSELLGCFIPNHGCIDNAIHTFAGSRLRLACQAIMTEQGRKEAIGQAKLTSAYHLPASYIIHTVGPRITKGRHVSPIRADLLARCYRSSLDLAVKAGLTSLAFCSISTGEFGFPKKEAAQIAIKTVLKWQAEHPESKTLTVIFNTFTSEDKALYDTYLQKENNCE.

In terms of domain architecture, Macro spans 73-267 (VSVKDCQKTN…LYDTYLQKEN (195 aa)). Residues Asp-92, Ile-93, and Asn-106 each contribute to the ADP-D-ribose site. 3 residues coordinate Zn(2+): Cys-112, His-117, and Cys-119. ADP-D-ribose-binding residues include Cys-119, Ile-120, Asp-121, Ser-212, Thr-213, Gly-214, Glu-215, and Phe-216.

It belongs to the MacroD-type family. Zn-Macro subfamily. It depends on Zn(2+) as a cofactor.

The catalysed reaction is 4-O-(ADP-D-ribosyl)-L-aspartyl-[protein] + H2O = L-aspartyl-[protein] + ADP-D-ribose + H(+). ADP-ribosylhydrolase that specifically reverses the SirTM-mediated mono-ADP-ribosylation at an asparatate residue of GcvH-L, by releasing ADP-ribose from the target protein. May play a role in the regulation of the response to host-induced oxidative stress. This chain is Protein-ADP-ribose hydrolase, found in Streptococcus pyogenes serotype M6 (strain ATCC BAA-946 / MGAS10394).